The primary structure comprises 260 residues: MTDILNKILATKAQEVAAQKAAVNAEHIRTLAAEAAPVRSFIDSIRGKHRLNLPAVIAEIKKASPSKGLIRPDFRPAEIARAYENAGAACLSVLTDEPYFQGSPEYLKQAREAVSLPVLRKDFIIDEYQVYQARAWGADAVLLIAAALEQEQLERFEAVAHELGMTVLLELHDETELEKCRNLTTPLWGVNNRNLRTFEVSLDQTLSLLPALEGKTVVTESGITGKADVEFMQSRGVHTFLIGETFMRADDIEAEVGKLF.

The protein belongs to the TrpC family.

The enzyme catalyses 1-(2-carboxyphenylamino)-1-deoxy-D-ribulose 5-phosphate + H(+) = (1S,2R)-1-C-(indol-3-yl)glycerol 3-phosphate + CO2 + H2O. The protein operates within amino-acid biosynthesis; L-tryptophan biosynthesis; L-tryptophan from chorismate: step 4/5. This is Indole-3-glycerol phosphate synthase from Neisseria meningitidis serogroup B (strain ATCC BAA-335 / MC58).